A 131-amino-acid chain; its full sequence is Sperm microtubule inner protein 11 (131 aa).

The disordered stretch occupies residues 18–44 (KKRNTTEETNQKEPEPTRLPPIISKDG). Residues 21–33 (NTTEETNQKEPEP) show a composition bias toward basic and acidic residues.

As to quaternary structure, microtubule inner protein component of sperm flagellar doublet microtubules.

The protein localises to the cytoplasm. Its subcellular location is the cytoskeleton. It is found in the flagellum axoneme. Microtubule inner protein (MIP) part of the dynein-decorated doublet microtubules (DMTs) in flagellum axoneme. May serve to reinforce and thus stabilize the microtubule structure in the sperm flagella. This chain is Sperm microtubule inner protein 11, found in Homo sapiens (Human).